Consider the following 434-residue polypeptide: Histidinol dehydrogenase (434 aa).

Positions 130, 191, and 214 each coordinate NAD(+). Substrate contacts are provided by serine 237, glutamine 259, and histidine 262. 2 residues coordinate Zn(2+): glutamine 259 and histidine 262. Catalysis depends on proton acceptor residues glutamate 327 and histidine 328. Histidine 328, aspartate 361, glutamate 415, and histidine 420 together coordinate substrate. Aspartate 361 provides a ligand contact to Zn(2+). Histidine 420 is a Zn(2+) binding site.

The protein belongs to the histidinol dehydrogenase family. The cofactor is Zn(2+).

It catalyses the reaction L-histidinol + 2 NAD(+) + H2O = L-histidine + 2 NADH + 3 H(+). Its pathway is amino-acid biosynthesis; L-histidine biosynthesis; L-histidine from 5-phospho-alpha-D-ribose 1-diphosphate: step 9/9. Functionally, catalyzes the sequential NAD-dependent oxidations of L-histidinol to L-histidinaldehyde and then to L-histidine. The polypeptide is Histidinol dehydrogenase (Chromobacterium violaceum (strain ATCC 12472 / DSM 30191 / JCM 1249 / CCUG 213 / NBRC 12614 / NCIMB 9131 / NCTC 9757 / MK)).